The primary structure comprises 280 residues: Release factor glutamine methyltransferase (280 aa).

S-adenosyl-L-methionine-binding positions include 120–124 (GTGSG), aspartate 143, and asparagine 186. 186–189 (NPPY) serves as a coordination point for substrate.

It belongs to the protein N5-glutamine methyltransferase family. PrmC subfamily.

It carries out the reaction L-glutaminyl-[peptide chain release factor] + S-adenosyl-L-methionine = N(5)-methyl-L-glutaminyl-[peptide chain release factor] + S-adenosyl-L-homocysteine + H(+). Methylates the class 1 translation termination release factors RF1/PrfA and RF2/PrfB on the glutamine residue of the universally conserved GGQ motif. The chain is Release factor glutamine methyltransferase from Koribacter versatilis (strain Ellin345).